A 609-amino-acid polypeptide reads, in one-letter code: X-ray repair cross-complementing protein 6 (609 aa).

Positions M1–G28 are disordered. S2 is subject to N-acetylserine. The residue at position 2 (S2) is a Phosphoserine. S6 bears the Phosphoserine; by PRKDC mark. Over residues G12 to L24 the composition is skewed to acidic residues. S27 carries the post-translational modification Phosphoserine. The active-site Schiff-base intermediate with DNA; for 5'-deoxyribose-5-phosphate lyase activity is the K31. At K31 the chain carries N6-acetyllysine. S51 carries the phosphoserine; by PRKDC modification. One can recognise a Ku domain in the interval L261–K468. Positions V277 to D341 are DNA-binding. K287 is covalently cross-linked (Glycyl lysine isopeptide (Lys-Gly) (interchain with G-Cter in SUMO2)). A Phosphoserine modification is found at S306. N6-acetyllysine is present on residues K317, K331, and K338. A Glycyl lysine isopeptide (Lys-Gly) (interchain with G-Cter in SUMO2) cross-link involves residue K317. The segment at S373–V482 is interaction with XRCC5. The residue at position 455 (T455) is a Phosphothreonine. An N6-acetyllysine modification is found at K461. 2 positions are modified to phosphoserine: S477 and S520. The tract at residues P536–E562 is disordered. N6-acetyllysine is present on residues K539, K542, and K544. Residue S550 is modified to Phosphoserine. Positions S550–D609 are interaction with DEAF1. Residues K553 and K556 each carry the N6-acetyllysine modification. A Glycyl lysine isopeptide (Lys-Gly) (interchain with G-Cter in SUMO2) cross-link involves residue K556. At S560 the chain carries Phosphoserine. An N6,N6,N6-trimethyllysine modification is found at K570. In terms of domain architecture, SAP spans L573 to F607. The interval V578 to E583 is interaction with BAX.

It belongs to the ku70 family. Forms a heterodimer with XRCC5/Ku80; heterodimerization stabilizes XRCC5 protein. Component of the core long-range non-homologous end joining (NHEJ) complex (also named DNA-PK complex) composed of PRKDC, LIG4, XRCC4, XRCC6/Ku70, XRCC5/Ku86 and NHEJ1/XLF. Additional component of the NHEJ complex includes PAXX. Following autophosphorylation, PRKDC dissociates from DNA, leading to formation of the short-range NHEJ complex, composed of LIG4, XRCC4, XRCC6/Ku70, XRCC5/Ku86 and NHEJ1/XLF. The XRCC5-XRCC6 dimer also associates with NAA15, and this complex binds to the osteocalcin promoter and activates osteocalcin expression. In addition, XRCC6 interacts with the osteoblast-specific transcription factors MSX2, RUNX2 and DLX5. Interacts with ELF3. Interacts with ATP23. The XRCC5-XRRC6 dimer associates in a DNA-dependent manner with APEX1. Binds to CDK9 isoform 2. Identified in a complex with DEAF1 and XRCC5. Interacts with DEAF1 (via the SAND domain); the interaction is direct and may be inhibited by DNA-binding. Interacts with CLU. Interacts with NR4A3; the DNA-dependent protein kinase complex DNA-PK phosphorylates and activates NR4A3 and prevents NR4A3 ubiquitinylation and degradation. Interacts with CYREN isoform 1 (CYREN-1) and isoform 4 (CYREN-2) (via KBM motif). Interacts (via N-terminus) with HSF1 (via N-terminus); this interaction is direct and prevents XRCC5/XRCC6 heterodimeric binding and non-homologous end joining (NHEJ) repair activities induced by ionizing radiation (IR). Part of the HDP-RNP complex composed of at least HEXIM1, PRKDC, XRCC5, XRCC6, paraspeckle proteins (SFPQ, NONO, PSPC1, RBM14, and MATR3) and NEAT1 RNA. Interacts with HMBOX1. Interacts with ATF7. Interacts with APLF (via KBM motif). Interacts with WRN (via KBM motif). The XRCC5-XRCC6 dimer associates with ALKBH2. Interacts with TPRN; TPRN interacts with a number of DNA damage response proteins, is recruited to sites of DNA damage and may play a role in DNA damage repair. When not acetylated, interacts with BAX. Interacts with ERCC6L2. In terms of assembly, (Microbial infection) Interacts with human T-cell leukemia virus 1/HTLV-1 protein HBZ. Post-translationally, phosphorylation by PRKDC may enhance helicase activity. Phosphorylation of Ser-51 does not affect DNA repair. ADP-ribosylated by PARP3. In terms of processing, methylation by SETD4 leads to accumulation in the cytoplasm and is a prerequisite for acetylation, possibly due to the change of subcellular from the nucleus to the cytosol initiated by methylation, acetylation occurring in the cytosol. Post-translationally, acetylation can be catalyzed in vitro by CREBBP/CBP and KAT2B/PCAF.

The protein resides in the nucleus. Its subcellular location is the chromosome. It is found in the cytoplasm. Single-stranded DNA-dependent ATP-dependent helicase that plays a key role in DNA non-homologous end joining (NHEJ) by recruiting DNA-PK to DNA. Required for double-strand break repair and V(D)J recombination. Also has a role in chromosome translocation. Has a role in chromosome translocation. The DNA helicase II complex binds preferentially to fork-like ends of double-stranded DNA in a cell cycle-dependent manner. It works in the 3'-5' direction. During NHEJ, the XRCC5-XRRC6 dimer performs the recognition step: it recognizes and binds to the broken ends of the DNA and protects them from further resection. Binding to DNA may be mediated by XRCC6. The XRCC5-XRRC6 dimer acts as a regulatory subunit of the DNA-dependent protein kinase complex DNA-PK by increasing the affinity of the catalytic subunit PRKDC to DNA by 100-fold. The XRCC5-XRRC6 dimer is probably involved in stabilizing broken DNA ends and bringing them together. The assembly of the DNA-PK complex to DNA ends is required for the NHEJ ligation step. Probably also acts as a 5'-deoxyribose-5-phosphate lyase (5'-dRP lyase), by catalyzing the beta-elimination of the 5' deoxyribose-5-phosphate at an abasic site near double-strand breaks. 5'-dRP lyase activity allows to 'clean' the termini of abasic sites, a class of nucleotide damage commonly associated with strand breaks, before such broken ends can be joined. The XRCC5-XRRC6 dimer together with APEX1 acts as a negative regulator of transcription. In association with NAA15, the XRCC5-XRRC6 dimer binds to the osteocalcin promoter and activates osteocalcin expression. Plays a role in the regulation of DNA virus-mediated innate immune response by assembling into the HDP-RNP complex, a complex that serves as a platform for IRF3 phosphorylation and subsequent innate immune response activation through the cGAS-STING pathway. Negatively regulates apoptosis by interacting with BAX and sequestering it from the mitochondria. Might have deubiquitination activity, acting on BAX. The protein is X-ray repair cross-complementing protein 6 (XRCC6) of Homo sapiens (Human).